A 325-amino-acid chain; its full sequence is Taste receptor type 2 member 7 (325 aa).

At methionine 1 to leucine 9 the chain is on the extracellular side. Residues leucine 10–valine 30 traverse the membrane as a helical segment. At asparagine 31–arginine 55 the chain is on the cytoplasmic side. A helical membrane pass occupies residues isoleucine 56–tyrosine 76. Topologically, residues alanine 77–histidine 94 are extracellular. The helical transmembrane segment at leucine 95–phenylalanine 115 threads the bilayer. Residues histidine 116–arginine 128 lie on the Cytoplasmic side of the membrane. A helical membrane pass occupies residues valine 129–threonine 149. At glutamate 150 to asparagine 187 the chain is on the extracellular side. 2 N-linked (GlcNAc...) asparagine glycosylation sites follow: asparagine 167 and asparagine 175. Residues leucine 188–leucine 208 form a helical membrane-spanning segment. At arginine 209–lysine 235 the chain is on the cytoplasmic side. The helical transmembrane segment at alanine 236–serine 256 threads the bilayer. The Extracellular portion of the chain corresponds to serine 257–alanine 266. Residues valine 267 to leucine 287 form a helical membrane-spanning segment. The Cytoplasmic portion of the chain corresponds to glycine 288–glycine 319.

It belongs to the G-protein coupled receptor T2R family.

It localises to the membrane. Gustducin-coupled receptor implicated in the perception of bitter compounds in the oral cavity and the gastrointestinal tract. Signals through PLCB2 and the calcium-regulated cation channel TRPM5. The sequence is that of Taste receptor type 2 member 7 (TAS2R7) from Pan paniscus (Pygmy chimpanzee).